An 834-amino-acid chain; its full sequence is ATP-dependent RNA helicase ddx23 (834 aa).

2 disordered regions span residues 1 to 245 and 322 to 371; these read MDPP…TQFS and FGGY…GKQI. The segment covering 10–25 has biased composition (basic and acidic residues); sequence SKRDTKKKDEVNKEQP. Over residues 42–54 the composition is skewed to polar residues; that stretch reads SNPTQEEPTNTLQ. 4 stretches are compositionally biased toward basic and acidic residues: residues 70 to 110, 117 to 164, 171 to 205, and 231 to 245; these read GLKE…DYRD, GRDR…RRDG, RRRDERRENSGRRDYRDNDRRDDRRDNGRYGRDND, and DIHKDRIKRDTTQFS. Residues 328-362 are compositionally biased toward low complexity; it reads NNNNNGNHYNGNIYNNNNNNNNNNNNNNNINNNNN. The Q motif signature appears at 413 to 441; it reads RTWQESNLPREILEAIRQLGYEKPSPIQM. The 200-residue stretch at 444–643 folds into the Helicase ATP-binding domain; sequence IPISLTGRDI…KKYLRRPCTI (200 aa). 457–464 lines the ATP pocket; that stretch reads AETGSGKT. The DEAD box signature appears at 570-573; it reads DEAD. Residues 654–815 form the Helicase C-terminal domain; it reads RIRQTVIFVK…IVPIELLKHP (162 aa). The interval 813 to 834 is disordered; the sequence is KHPSSQQKHGSSKDHNKSVIFK. A compositionally biased stretch (basic and acidic residues) spans 823-834; that stretch reads SSKDHNKSVIFK.

Belongs to the DEAD box helicase family. DDX23/PRP28 subfamily.

The protein resides in the cytoplasm. It is found in the nucleus. It carries out the reaction ATP + H2O = ADP + phosphate + H(+). In terms of biological role, probable ATP-dependent RNA helicase which may be involved in mRNA splicing. The chain is ATP-dependent RNA helicase ddx23 (helB2) from Dictyostelium discoideum (Social amoeba).